We begin with the raw amino-acid sequence, 156 residues long: MLNRTILVGRLTRDPELRTTQSGVNVASFTLAVNRTFTNAQGEREADFINIIVFKKQAENVNKYLSKGSLAGVDGRLQTRNYENKEGQRVYVTEVIADSIQFLEPKNSNDTQQDLYQQQVQQTRGQSQYSNNKPVKDNPFANANGPIELNDDDLPF.

An SSB domain is found at 1–104; sequence MLNRTILVGR…VIADSIQFLE (104 aa). Residues 104–156 form a disordered region; that stretch reads EPKNSNDTQQDLYQQQVQQTRGQSQYSNNKPVKDNPFANANGPIELNDDDLPF. The span at 112-128 shows a compositional bias: low complexity; sequence QQDLYQQQVQQTRGQSQ. Positions 151–156 match the Important for interaction with partner proteins motif; that stretch reads DDDLPF.

As to quaternary structure, homotetramer.

Its function is as follows. Plays an important role in DNA replication, recombination and repair. Binds to ssDNA and to an array of partner proteins to recruit them to their sites of action during DNA metabolism. In Staphylococcus aureus (strain Mu50 / ATCC 700699), this protein is Single-stranded DNA-binding protein 1 (ssb).